Here is a 78-residue protein sequence, read N- to C-terminus: Large ribosomal subunit protein uL29 (78 aa).

Belongs to the universal ribosomal protein uL29 family.

This is Large ribosomal subunit protein uL29 from Salinispora arenicola (strain CNS-205).